The sequence spans 427 residues: tRNA pseudouridine synthase Pus10 (427 aa).

The Nucleophile role is filled by Asp-240. Substrate-binding residues include Tyr-306 and Tyr-378.

The protein belongs to the pseudouridine synthase Pus10 family.

It carries out the reaction uridine(54) in tRNA = pseudouridine(54) in tRNA. It catalyses the reaction uridine(55) in tRNA = pseudouridine(55) in tRNA. Functionally, responsible for synthesis of pseudouridine from uracil-54 and uracil-55 in the psi GC loop of transfer RNAs. This Halorubrum lacusprofundi (strain ATCC 49239 / DSM 5036 / JCM 8891 / ACAM 34) protein is tRNA pseudouridine synthase Pus10.